The sequence spans 470 residues: Argininosuccinate lyase (470 aa).

Belongs to the lyase 1 family. Argininosuccinate lyase subfamily.

The protein resides in the cytoplasm. The enzyme catalyses 2-(N(omega)-L-arginino)succinate = fumarate + L-arginine. The protein operates within amino-acid biosynthesis; L-arginine biosynthesis; L-arginine from L-ornithine and carbamoyl phosphate: step 3/3. The polypeptide is Argininosuccinate lyase (Ehrlichia chaffeensis (strain ATCC CRL-10679 / Arkansas)).